Here is a 121-residue protein sequence, read N- to C-terminus: Small ribosomal subunit protein bS6 (121 aa).

The segment at 96–121 (DTGPSSMMKTVEREDARKTQQAEYQA) is disordered. Over residues 105 to 115 (TVEREDARKTQ) the composition is skewed to basic and acidic residues.

Belongs to the bacterial ribosomal protein bS6 family.

In terms of biological role, binds together with bS18 to 16S ribosomal RNA. In Albidiferax ferrireducens (strain ATCC BAA-621 / DSM 15236 / T118) (Rhodoferax ferrireducens), this protein is Small ribosomal subunit protein bS6.